Here is a 460-residue protein sequence, read N- to C-terminus: NADH-ubiquinone oxidoreductase chain 4 (460 aa).

Transmembrane regions (helical) follow at residues 20 to 42 (PKWL…LTWL), 61 to 81 (PLST…VLAS), 93 to 113 (QRLY…AFGA), 114 to 134 (TEII…LIII), 148 to 168 (TYFL…LLLL), 195 to 215 (IWWA…GVHL), 225 to 245 (PVAG…YGMM), 258 to 278 (LAYP…SICL), 285 to 304 (SLIA…GILI), 309 to 331 (GFTG…FCLA), 351 to 371 (MIFP…LALP), and 394 to 414 (IILT…LFLM).

Belongs to the complex I subunit 4 family.

The protein localises to the mitochondrion membrane. It carries out the reaction a ubiquinone + NADH + 5 H(+)(in) = a ubiquinol + NAD(+) + 4 H(+)(out). In terms of biological role, core subunit of the mitochondrial membrane respiratory chain NADH dehydrogenase (Complex I) that is believed to belong to the minimal assembly required for catalysis. Complex I functions in the transfer of electrons from NADH to the respiratory chain. The immediate electron acceptor for the enzyme is believed to be ubiquinone. This Formosania lacustris (Oriental stream loach) protein is NADH-ubiquinone oxidoreductase chain 4 (MT-ND4).